The sequence spans 319 residues: 4-hydroxy-3-methylbut-2-enyl diphosphate reductase (319 aa).

Position 17 (Cys17) interacts with [4Fe-4S] cluster. (2E)-4-hydroxy-3-methylbut-2-enyl diphosphate is bound by residues His46 and His79. The dimethylallyl diphosphate site is built by His46 and His79. Positions 46 and 79 each coordinate isopentenyl diphosphate. Cys101 is a binding site for [4Fe-4S] cluster. His129 is a (2E)-4-hydroxy-3-methylbut-2-enyl diphosphate binding site. Residue His129 participates in dimethylallyl diphosphate binding. His129 provides a ligand contact to isopentenyl diphosphate. The active-site Proton donor is Glu131. Position 170 (Thr170) interacts with (2E)-4-hydroxy-3-methylbut-2-enyl diphosphate. Cys200 provides a ligand contact to [4Fe-4S] cluster. Ser228, Ser229, Asn230, and Ser273 together coordinate (2E)-4-hydroxy-3-methylbut-2-enyl diphosphate. Dimethylallyl diphosphate is bound by residues Ser228, Ser229, Asn230, and Ser273. Residues Ser228, Ser229, Asn230, and Ser273 each contribute to the isopentenyl diphosphate site.

The protein belongs to the IspH family. [4Fe-4S] cluster serves as cofactor.

The enzyme catalyses isopentenyl diphosphate + 2 oxidized [2Fe-2S]-[ferredoxin] + H2O = (2E)-4-hydroxy-3-methylbut-2-enyl diphosphate + 2 reduced [2Fe-2S]-[ferredoxin] + 2 H(+). It catalyses the reaction dimethylallyl diphosphate + 2 oxidized [2Fe-2S]-[ferredoxin] + H2O = (2E)-4-hydroxy-3-methylbut-2-enyl diphosphate + 2 reduced [2Fe-2S]-[ferredoxin] + 2 H(+). Its pathway is isoprenoid biosynthesis; dimethylallyl diphosphate biosynthesis; dimethylallyl diphosphate from (2E)-4-hydroxy-3-methylbutenyl diphosphate: step 1/1. The protein operates within isoprenoid biosynthesis; isopentenyl diphosphate biosynthesis via DXP pathway; isopentenyl diphosphate from 1-deoxy-D-xylulose 5-phosphate: step 6/6. In terms of biological role, catalyzes the conversion of 1-hydroxy-2-methyl-2-(E)-butenyl 4-diphosphate (HMBPP) into a mixture of isopentenyl diphosphate (IPP) and dimethylallyl diphosphate (DMAPP). Acts in the terminal step of the DOXP/MEP pathway for isoprenoid precursor biosynthesis. This Cereibacter sphaeroides (strain ATCC 17023 / DSM 158 / JCM 6121 / CCUG 31486 / LMG 2827 / NBRC 12203 / NCIMB 8253 / ATH 2.4.1.) (Rhodobacter sphaeroides) protein is 4-hydroxy-3-methylbut-2-enyl diphosphate reductase.